The sequence spans 163 residues: Lipoprotein signal peptidase (163 aa).

Transmembrane regions (helical) follow at residues 4 to 24 (SAAL…LLIL), 66 to 86 (LDAW…AWLW), and 92 to 112 (DHQF…GNII). Catalysis depends on residues Asp-122 and Asp-140. A helical transmembrane segment spans residues 132–152 (SFAVFNLADSLITIGAGFILL).

This sequence belongs to the peptidase A8 family.

The protein localises to the cell inner membrane. The catalysed reaction is Release of signal peptides from bacterial membrane prolipoproteins. Hydrolyzes -Xaa-Yaa-Zaa-|-(S,diacylglyceryl)Cys-, in which Xaa is hydrophobic (preferably Leu), and Yaa (Ala or Ser) and Zaa (Gly or Ala) have small, neutral side chains.. It participates in protein modification; lipoprotein biosynthesis (signal peptide cleavage). This protein specifically catalyzes the removal of signal peptides from prolipoproteins. The polypeptide is Lipoprotein signal peptidase (Allorhizobium ampelinum (strain ATCC BAA-846 / DSM 112012 / S4) (Agrobacterium vitis (strain S4))).